The primary structure comprises 316 residues: MSDVSKASLPKAIFLMGPTASGKTALAIELRKVLPVELISVDSALIYQGMDVGTAKPNAEELHAAPHRLLDILDPAQAYSAADFRRDALAEMAEITAAGRIPLLVGGTMLYFKALLEGLSPLPSADPEVRAKIEQQAAEQGWSALHKQLEEVDPVAAARIHPNDPQRLSRALEVFFISGKTLTELTQTSGEALPYQVHQFAIAPASRELLHQRIEQRFHQMLASGFEAEVRALFARGDLHTDMPSIRCVGYRQIWSYIEGEISYDEMVYRGVCATRQLAKRQITWLRGWEGIHWLDSEKPEQSYNEVLQVVGAIAD.

Position 17–24 (17–24 (GPTASGKT)) interacts with ATP. 19-24 (TASGKT) provides a ligand contact to substrate. 4 interaction with substrate tRNA regions span residues 42 to 45 (DSAL), 166 to 170 (QRLSR), 247 to 252 (RCVGYR), and 280 to 287 (KRQITWLR).

Belongs to the IPP transferase family. In terms of assembly, monomer. Mg(2+) is required as a cofactor.

It catalyses the reaction adenosine(37) in tRNA + dimethylallyl diphosphate = N(6)-dimethylallyladenosine(37) in tRNA + diphosphate. Its function is as follows. Catalyzes the transfer of a dimethylallyl group onto the adenine at position 37 in tRNAs that read codons beginning with uridine, leading to the formation of N6-(dimethylallyl)adenosine (i(6)A). The chain is tRNA dimethylallyltransferase from Enterobacter sp. (strain 638).